Consider the following 323-residue polypeptide: Acetyl esterase (323 aa).

An Involved in the stabilization of the negatively charged intermediate by the formation of the oxyanion hole motif is present at residues 91 to 93 (HGG). Catalysis depends on residues serine 165, aspartate 262, and histidine 292.

Belongs to the 'GDXG' lipolytic enzyme family. As to quaternary structure, homodimer. Interacts with MalT and MelA.

Its subcellular location is the cytoplasm. In terms of biological role, displays esterase activity towards short chain fatty esters (acyl chain length of up to 8 carbons). Able to hydrolyze triacetylglycerol (triacetin) and tributyrylglycerol (tributyrin), but not trioleylglycerol (triolein) or cholesterol oleate. Negatively regulates MalT activity by antagonizing maltotriose binding. Inhibits MelA galactosidase activity. This is Acetyl esterase from Salmonella dublin (strain CT_02021853).